The chain runs to 439 residues: Methylenetetrahydrofolate--tRNA-(uracil-5-)-methyltransferase TrmFO (439 aa).

8–13 contributes to the FAD binding site; the sequence is GGGLAG.

The protein belongs to the MnmG family. TrmFO subfamily. FAD is required as a cofactor.

The protein resides in the cytoplasm. The enzyme catalyses uridine(54) in tRNA + (6R)-5,10-methylene-5,6,7,8-tetrahydrofolate + NADH + H(+) = 5-methyluridine(54) in tRNA + (6S)-5,6,7,8-tetrahydrofolate + NAD(+). The catalysed reaction is uridine(54) in tRNA + (6R)-5,10-methylene-5,6,7,8-tetrahydrofolate + NADPH + H(+) = 5-methyluridine(54) in tRNA + (6S)-5,6,7,8-tetrahydrofolate + NADP(+). Its function is as follows. Catalyzes the folate-dependent formation of 5-methyl-uridine at position 54 (M-5-U54) in all tRNAs. This is Methylenetetrahydrofolate--tRNA-(uracil-5-)-methyltransferase TrmFO from Dictyoglomus thermophilum (strain ATCC 35947 / DSM 3960 / H-6-12).